The following is a 254-amino-acid chain: Nickel import ATP-binding protein NikO (254 aa).

The ABC transporter domain maps to 5–246 (FELQGVQFAY…TALLRRARLL (242 aa)). 37–44 (GANGSGKS) serves as a coordination point for ATP.

Belongs to the ABC transporter superfamily. Forms an energy-coupling factor (ECF) transporter complex composed of an ATP-binding protein (A component, NikO), a transmembrane protein (T component, NikQ) and a fused possible substrate-capture protein (S component, NikMN) of unknown stoichimetry.

Its subcellular location is the cell inner membrane. It catalyses the reaction Ni(2+)(out) + ATP + H2O = Ni(2+)(in) + ADP + phosphate + H(+). Functionally, part of the energy-coupling factor (ECF) transporter complex NikMNQO involved in nickel import. The complex confers nickel uptake upon expression in E.coli. Shows very low activity with cobalt. Presumably responsible for energy coupling to the transport system. This Rhodobacter capsulatus (strain ATCC BAA-309 / NBRC 16581 / SB1003) protein is Nickel import ATP-binding protein NikO.